The chain runs to 142 residues: Small ribosomal subunit protein uS8c (142 aa).

Belongs to the universal ribosomal protein uS8 family. Part of the 30S ribosomal subunit.

The protein localises to the plastid. In terms of biological role, one of the primary rRNA binding proteins, it binds directly to 16S rRNA central domain where it helps coordinate assembly of the platform of the 30S subunit. The protein is Small ribosomal subunit protein uS8c (rps8) of Euglena longa (Euglenophycean alga).